A 484-amino-acid polypeptide reads, in one-letter code: Ribosome biogenesis protein YTM1 (484 aa).

The interval Val11–Arg94 is ubiquitin-like (UBL) domain. 7 WD repeats span residues Ser121–Ser160, Gly166–Ser204, Gly215–Ala254, Val289–Thr329, Thr331–Ser372, Gly378–Gly418, and Gly448–Ser484.

The protein belongs to the WD repeat WDR12/YTM1 family. As to quaternary structure, component of the NOP7 complex, composed of ERB1, NOP7 and YTM1. The complex is held together by ERB1, which interacts with NOP7 via its N-terminal domain and with YTM1 via a high-affinity interaction between the seven-bladed beta-propeller domains of the 2 proteins. The NOP7 complex associates with the 66S pre-ribosome. Interacts (via UBL domain) with MDN1 (via VWFA/MIDAS domain).

It localises to the nucleus. Its subcellular location is the nucleolus. It is found in the nucleoplasm. Its function is as follows. Component of the NOP7 complex, which is required for maturation of the 25S and 5.8S ribosomal RNAs and formation of the 60S ribosome. This is Ribosome biogenesis protein YTM1 from Pyricularia oryzae (strain 70-15 / ATCC MYA-4617 / FGSC 8958) (Rice blast fungus).